The sequence spans 173 residues: Avenin-like a5 (173 aa).

A signal peptide spans Met-1 to Ala-19.

It belongs to the prolamin family. Contains 7 disulfide bonds.

Seed storage protein. Not integrated in the gluten polymer through disulfide bonds, unless incorporated by reduction and reoxidation during dough making. Increases dough strength and bread volume, but decreases dough stability when added into a base wheat flour. This is Avenin-like a5 from Triticum aestivum (Wheat).